A 245-amino-acid chain; its full sequence is uncharacterized protein (245 aa).

Residues 162 to 174 (KEQSDVTTSERTR) show a composition bias toward basic and acidic residues. Residues 162–183 (KEQSDVTTSERTRSPPGSSKTT) are disordered.

This is an uncharacterized protein from Homo sapiens (Human).